Consider the following 449-residue polypeptide: Signal recognition particle protein (449 aa).

Residues 109-116 (GLQGSGKT), 191-195 (DTAGR), and 249-252 (SRID) each bind GTP.

It belongs to the GTP-binding SRP family. SRP54 subfamily. Part of the signal recognition particle protein translocation system, which is composed of SRP and FtsY. SRP is a ribonucleoprotein composed of Ffh and a 4.5S RNA molecule.

It localises to the cytoplasm. The enzyme catalyses GTP + H2O = GDP + phosphate + H(+). Involved in targeting and insertion of nascent membrane proteins into the cytoplasmic membrane. Binds to the hydrophobic signal sequence of the ribosome-nascent chain (RNC) as it emerges from the ribosomes. The SRP-RNC complex is then targeted to the cytoplasmic membrane where it interacts with the SRP receptor FtsY. Interaction with FtsY leads to the transfer of the RNC complex to the Sec translocase for insertion into the membrane, the hydrolysis of GTP by both Ffh and FtsY, and the dissociation of the SRP-FtsY complex into the individual components. This Rickettsia felis (strain ATCC VR-1525 / URRWXCal2) (Rickettsia azadi) protein is Signal recognition particle protein.